The sequence spans 187 residues: Protein GrpE (187 aa).

Positions methionine 1 to cysteine 15 are enriched in basic and acidic residues. The segment at methionine 1–glutamate 40 is disordered.

The protein belongs to the GrpE family. In terms of assembly, homodimer.

The protein localises to the cytoplasm. Functionally, participates actively in the response to hyperosmotic and heat shock by preventing the aggregation of stress-denatured proteins, in association with DnaK and GrpE. It is the nucleotide exchange factor for DnaK and may function as a thermosensor. Unfolded proteins bind initially to DnaJ; upon interaction with the DnaJ-bound protein, DnaK hydrolyzes its bound ATP, resulting in the formation of a stable complex. GrpE releases ADP from DnaK; ATP binding to DnaK triggers the release of the substrate protein, thus completing the reaction cycle. Several rounds of ATP-dependent interactions between DnaJ, DnaK and GrpE are required for fully efficient folding. In Alkaliphilus oremlandii (strain OhILAs) (Clostridium oremlandii (strain OhILAs)), this protein is Protein GrpE.